Reading from the N-terminus, the 445-residue chain is Phosphoglucosamine mutase (445 aa).

Catalysis depends on Ser-102, which acts as the Phosphoserine intermediate. Residues Ser-102, Asp-240, Asp-242, and Asp-244 each coordinate Mg(2+). Position 102 is a phosphoserine (Ser-102).

Belongs to the phosphohexose mutase family. The cofactor is Mg(2+). In terms of processing, activated by phosphorylation.

It carries out the reaction alpha-D-glucosamine 1-phosphate = D-glucosamine 6-phosphate. Functionally, catalyzes the conversion of glucosamine-6-phosphate to glucosamine-1-phosphate. This Mycobacterium marinum (strain ATCC BAA-535 / M) protein is Phosphoglucosamine mutase.